A 424-amino-acid polypeptide reads, in one-letter code: UDP-N-acetylglucosamine 1-carboxyvinyltransferase (424 aa).

22-23 (KN) contacts phosphoenolpyruvate. Residue arginine 93 participates in UDP-N-acetyl-alpha-D-glucosamine binding. Catalysis depends on cysteine 117, which acts as the Proton donor. The residue at position 117 (cysteine 117) is a 2-(S-cysteinyl)pyruvic acid O-phosphothioketal. UDP-N-acetyl-alpha-D-glucosamine contacts are provided by residues 122 to 126 (RPVDL), 162 to 165 (KVSV), aspartate 307, and isoleucine 329.

It belongs to the EPSP synthase family. MurA subfamily.

The protein resides in the cytoplasm. It carries out the reaction phosphoenolpyruvate + UDP-N-acetyl-alpha-D-glucosamine = UDP-N-acetyl-3-O-(1-carboxyvinyl)-alpha-D-glucosamine + phosphate. Its pathway is cell wall biogenesis; peptidoglycan biosynthesis. Its function is as follows. Cell wall formation. Adds enolpyruvyl to UDP-N-acetylglucosamine. This Haemophilus influenzae (strain PittGG) protein is UDP-N-acetylglucosamine 1-carboxyvinyltransferase.